The sequence spans 138 residues: Large ribosomal subunit protein uL16 (138 aa).

Over residues 1 to 13 the composition is skewed to basic residues; it reads MLQPSRRKYRKEQ. A disordered region spans residues 1–22; that stretch reads MLQPSRRKYRKEQKGRNTGLAT.

Belongs to the universal ribosomal protein uL16 family. As to quaternary structure, part of the 50S ribosomal subunit.

Its function is as follows. Binds 23S rRNA and is also seen to make contacts with the A and possibly P site tRNAs. The sequence is that of Large ribosomal subunit protein uL16 from Bordetella petrii (strain ATCC BAA-461 / DSM 12804 / CCUG 43448).